Here is a 267-residue protein sequence, read N- to C-terminus: Ribosomal RNA small subunit methyltransferase A (267 aa).

6 residues coordinate S-adenosyl-L-methionine: asparagine 18, leucine 20, glycine 45, glutamate 66, aspartate 91, and asparagine 112.

The protein belongs to the class I-like SAM-binding methyltransferase superfamily. rRNA adenine N(6)-methyltransferase family. RsmA subfamily.

It is found in the cytoplasm. It catalyses the reaction adenosine(1518)/adenosine(1519) in 16S rRNA + 4 S-adenosyl-L-methionine = N(6)-dimethyladenosine(1518)/N(6)-dimethyladenosine(1519) in 16S rRNA + 4 S-adenosyl-L-homocysteine + 4 H(+). In terms of biological role, specifically dimethylates two adjacent adenosines (A1518 and A1519) in the loop of a conserved hairpin near the 3'-end of 16S rRNA in the 30S particle. May play a critical role in biogenesis of 30S subunits. This Shewanella woodyi (strain ATCC 51908 / MS32) protein is Ribosomal RNA small subunit methyltransferase A.